Consider the following 275-residue polypeptide: Multivesicular body subunit 12A (275 aa).

One can recognise an MABP domain in the interval 5–145 (STPITGLAWI…GLVFWCRKGS (141 aa)). An SH3-binding motif is present at residues 151 to 156 (PTPKPR). In terms of domain architecture, UMA spans 216 to 267 (IDGIPFTIHPMFENTINNSSVAASDFRDLHIKTLSEIESEYNYGFVVEKTAA).

Belongs to the MVB12 family. As to quaternary structure, component of the ESCRT-I complex (endosomal sorting complex required for transport I).

It localises to the cytoplasm. The protein resides in the endosome. The protein localises to the late endosome membrane. Its function is as follows. Component of the ESCRT-I complex, a regulator of vesicular trafficking process. Required for the sorting of endocytic ubiquitinated cargos into multivesicular bodies. The chain is Multivesicular body subunit 12A (mvb12a) from Xenopus laevis (African clawed frog).